The chain runs to 120 residues: ATP-dependent Clp protease adapter protein ClpS (120 aa).

The protein belongs to the ClpS family. Binds to the N-terminal domain of the chaperone ClpA.

Involved in the modulation of the specificity of the ClpAP-mediated ATP-dependent protein degradation. The chain is ATP-dependent Clp protease adapter protein ClpS from Pseudomonas syringae pv. tomato (strain ATCC BAA-871 / DC3000).